We begin with the raw amino-acid sequence, 141 residues long: Cholinesterase (141 aa).

N39 carries N-linked (GlcNAc...) asparagine glycosylation. Residue 49–50 participates in substrate binding; the sequence is GG. Residue S131 is the Acyl-ester intermediate of the active site. S131 is modified (phosphoserine).

It belongs to the type-B carboxylesterase/lipase family. Homotetramer; disulfide-linked. Dimer of dimers. In terms of tissue distribution, present in most cells except erythrocytes.

The protein localises to the secreted. It catalyses the reaction an acylcholine + H2O = a carboxylate + choline + H(+). In terms of biological role, esterase with broad substrate specificity. Contributes to the inactivation of the neurotransmitter acetylcholine. Can degrade neurotoxic organophosphate esters. The protein is Cholinesterase (BCHE) of Canis lupus familiaris (Dog).